The following is a 476-amino-acid chain: Sulfate adenylyltransferase subunit 1 (476 aa).

One can recognise a tr-type G domain in the interval 24 to 239 (KSMLRFLTCG…VLENVDIDQK (216 aa)). Positions 33–40 (GSVDDGKS) are G1. 33–40 (GSVDDGKS) contributes to the GTP binding site. A G2 region spans residues 91–95 (GITID). The G3 stretch occupies residues 112–115 (DTPG). Residues 112–116 (DTPGH) and 167–170 (NKMD) contribute to the GTP site. Residues 167 to 170 (NKMD) form a G4 region. Residues 205-207 (SAL) are G5.

It belongs to the TRAFAC class translation factor GTPase superfamily. Classic translation factor GTPase family. CysN/NodQ subfamily. As to quaternary structure, heterodimer composed of CysD, the smaller subunit, and CysN.

The catalysed reaction is sulfate + ATP + H(+) = adenosine 5'-phosphosulfate + diphosphate. It participates in sulfur metabolism; hydrogen sulfide biosynthesis; sulfite from sulfate: step 1/3. In terms of biological role, with CysD forms the ATP sulfurylase (ATPS) that catalyzes the adenylation of sulfate producing adenosine 5'-phosphosulfate (APS) and diphosphate, the first enzymatic step in sulfur assimilation pathway. APS synthesis involves the formation of a high-energy phosphoric-sulfuric acid anhydride bond driven by GTP hydrolysis by CysN coupled to ATP hydrolysis by CysD. The polypeptide is Sulfate adenylyltransferase subunit 1 (Vibrio atlanticus (strain LGP32) (Vibrio splendidus (strain Mel32))).